A 100-amino-acid polypeptide reads, in one-letter code: Urease subunit gamma (100 aa).

This sequence belongs to the urease gamma subunit family. In terms of assembly, heterotrimer of UreA (gamma), UreB (beta) and UreC (alpha) subunits. Three heterotrimers associate to form the active enzyme.

It is found in the cytoplasm. The enzyme catalyses urea + 2 H2O + H(+) = hydrogencarbonate + 2 NH4(+). The protein operates within nitrogen metabolism; urea degradation; CO(2) and NH(3) from urea (urease route): step 1/1. Its function is as follows. Expression of the urease operon increases the likelihood of bacterial survival by contributing to acid resistance in vitro and in vivo in BALB/c mice. Y.enterocolitica enters the body via an oral path and must survive the acidic stomach before being able to colonize the intestinal mucosa. This is Urease subunit gamma from Yersinia enterocolitica.